A 196-amino-acid chain; its full sequence is GTP cyclohydrolase 1 (196 aa).

Zn(2+) contacts are provided by Cys84, His87, and Cys157.

Belongs to the GTP cyclohydrolase I family. Toroid-shaped homodecamer, composed of two pentamers of five dimers.

The enzyme catalyses GTP + H2O = 7,8-dihydroneopterin 3'-triphosphate + formate + H(+). It participates in cofactor biosynthesis; 7,8-dihydroneopterin triphosphate biosynthesis; 7,8-dihydroneopterin triphosphate from GTP: step 1/1. This Corynebacterium glutamicum (strain R) protein is GTP cyclohydrolase 1.